A 1503-amino-acid polypeptide reads, in one-letter code: Mitogen-activated protein kinase-binding protein 1 (1503 aa).

WD repeat units lie at residues 89-130 (SSRK…QVAE), 133-174 (EHKY…VVAS), 176-214 (KVSS…TSKV), 271-310 (VELR…FLST), 337-376 (ARYP…KVGK), 382-431 (YHSS…VHGS), 472-511 (DPRV…EMLK), 514-556 (AHDS…SLQQ), 560-601 (EHSS…EGVQ), 609-648 (VRKT…QKKL), 654-693 (GEDG…CVAT), and 696-735 (GHSE…TISM). Disordered stretches follow at residues 745-817 (RQRG…SSPA), 874-917 (LAPS…RLQT), and 951-1176 (VYPE…SWAS). The span at 784–796 (KEGEDEGTEEEEL) shows a compositional bias: acidic residues. Polar residues-rich tracts occupy residues 905–917 (CVSQ…RLQT) and 957–972 (DSPT…QAPT). The span at 1028–1043 (DLEEPAEGDEDEEEEG) shows a compositional bias: acidic residues. Over residues 1058–1068 (PDQEQFLKQHF) the composition is skewed to basic and acidic residues. A compositionally biased stretch (polar residues) spans 1089 to 1129 (SQSISSRFLLQVQTSPLREPSLSSSGLALTSRPDQVSQVSG). At Ser1193 the chain carries Phosphoserine. 2 disordered regions span residues 1217-1238 (QGSL…SYQN) and 1369-1391 (QGPE…SSRP).

Can form homodimers (via C-terminus). Interacts (via C-terminus) with WDR62 (via C-terminus). Interacts with MAPK9. Interacts (via N-terminus) with NOD2; the interaction is enhanced in presence of muramyl dipeptide (MDP). Interacts with MAPK10. As to expression, ubiquitously expressed. Highest expression observed in brain.

The protein localises to the cytoplasm. Its subcellular location is the nucleus. The protein resides in the cytoskeleton. It localises to the spindle pole. In terms of biological role, negative regulator of NOD2 function. It down-regulates NOD2-induced processes such as activation of NF-kappa-B signaling, IL8 secretion and antibacterial response. Involved in JNK signaling pathway. The sequence is that of Mitogen-activated protein kinase-binding protein 1 (Mapkbp1) from Mus musculus (Mouse).